Reading from the N-terminus, the 365-residue chain is MDGGTFDIQPIGRFYGSNTTIRRPREITCFSYDAEHKFHLGDSSLRYYYTPRLPADLNRGFDTFQKLDDTADEHLDALLETIMALEKETGKRCEADIITWRGMMTKILTAPFDNLNGFEMNATCFQVGGENNLYKIQQKQIQENQRMPPGMASQDLMAYWGYKFETLCLLQQPWDPTPRAEIESREDLVVNNNAQYCSVVRTGIGSTRLIIGGEVDAVWDCKPDRKEDPINWVELKTSAEIRNDRDMIKYERKLLKFWAQSFLLGVPKIIVGFRDNHGIVHRLEELETASIPNKVKKLGRGTWDGNICINFAAAFLEWLKSTIKEGGTWRIRKLEKSSLIQVFKIEETGTGDIISRSFLDWRSRS.

Glu-165 is an a divalent metal cation binding site. Substrate-binding residues include Cys-197 and Glu-214. The a divalent metal cation site is built by Asp-216, Glu-234, and Leu-235. Substrate is bound by residues Lys-236 and Gln-260.

It belongs to the DXO/Dom3Z family. Interacts with rat1; the interaction is direct, stabilizes rat1 protein structure and stimulates its exoribonuclease activity. The interaction also stimulates rai1 pyrophosphohydrolase activity, probably by recruiting it to mRNA substrates. It depends on a divalent metal cation as a cofactor.

The protein localises to the nucleus. It catalyses the reaction a 5'-end NAD(+)-phospho-ribonucleoside in mRNA + H2O = a 5'-end phospho-ribonucleoside in mRNA + NAD(+) + H(+). The catalysed reaction is a 5'-end (N(7)-methyl 5'-triphosphoguanosine)-ribonucleoside-ribonucleotide in mRNA + H2O = a (N(7)-methyl 5'-triphosphoguanosine)-nucleoside + a 5'-end phospho-ribonucleoside in mRNA + H(+). The enzyme catalyses a 5'-end triphospho-ribonucleoside in mRNA + H2O = a 5'-end phospho-ribonucleoside in mRNA + diphosphate + H(+). Its function is as follows. Decapping enzyme for NAD-capped RNAs: specifically hydrolyzes the nicotinamide adenine dinucleotide (NAD) cap from a subset of RNAs by removing the entire NAD moiety from the 5'-end of an NAD-capped RNA. The NAD-cap is present at the 5'-end of some RNAs and snoRNAs. In contrast to the canonical 5'-end N7 methylguanosine (m7G) cap, the NAD cap promotes mRNA decay. Also acts as a non-canonical decapping enzyme that removes the entire cap structure of m7G capped or incompletely capped RNAs. Has decapping activity toward incomplete 5'-end m7G cap mRNAs such as unmethylated 5'-end-capped RNA (cap0), while it has no activity toward 2'-O-ribose methylated m7G cap (cap1). Also possesses RNA 5'-pyrophosphohydrolase activity by hydrolyzing the 5'-end triphosphate to release pyrophosphates. Stimulates exoribonuclease activity of Rat1, allowing it to degrade RNAs with stable secondary structure more effectively. This is Decapping nuclease RAI1 (rai1) from Aspergillus fumigatus (strain ATCC MYA-4609 / CBS 101355 / FGSC A1100 / Af293) (Neosartorya fumigata).